Here is a 669-residue protein sequence, read N- to C-terminus: CoB--CoM heterodisulfide reductase iron-sulfur subunit A 1 (669 aa).

153 to 176 (GGGIAGIQAALDLADQGFKVYLVE) is an FAD binding site. Position 200 (Sec-200) is a non-standard amino acid, selenocysteine. 4Fe-4S ferredoxin-type domains lie at 239–270 (KKPR…FDLG), 287–318 (LVYT…FDQE), 584–613 (ITAT…MVEK), and 617–646 (RVAE…LRYY). [4Fe-4S] cluster-binding residues include Cys-249, Cys-252, Cys-255, Cys-259, Cys-296, Cys-299, Cys-302, Cys-306, Cys-593, Cys-596, Cys-599, Cys-603, Cys-626, Cys-629, Cys-632, and Cys-636.

Belongs to the HdrA family. In terms of assembly, the ferredoxin:CoB-CoM heterodisulfide reductase is composed of three subunits; HdrA, HdrB and HdrC. [4Fe-4S] cluster is required as a cofactor. Requires FAD as cofactor.

The protein operates within cofactor metabolism; coenzyme M-coenzyme B heterodisulfide reduction; coenzyme B and coenzyme M from coenzyme M-coenzyme B heterodisulfide: step 1/1. In terms of biological role, part of a complex that catalyzes the reversible reduction of CoM-S-S-CoB to the thiol-coenzymes H-S-CoM (coenzyme M) and H-S-CoB (coenzyme B). In Methanopyrus kandleri (strain AV19 / DSM 6324 / JCM 9639 / NBRC 100938), this protein is CoB--CoM heterodisulfide reductase iron-sulfur subunit A 1 (hdrA1).